The primary structure comprises 421 residues: AP-3 complex subunit mu (421 aa).

Residues 178-420 form the MHD domain; sequence QNKIFFDIIE…TTKAGKFQVR (243 aa).

This sequence belongs to the adaptor complexes medium subunit family. As to quaternary structure, adaptor protein complex 3 (AP-3) is a heterotetramer composed of two large adaptins (delta-type subunit and beta-type subunit), a medium adaptin (mu-type subunit) and a small adaptin (sigma-type subunit).

Its subcellular location is the endosome membrane. In terms of biological role, part of the AP-3 complex, an adaptor-related complex which is essential for the compartmentalization of the endocytic pathway. In Dictyostelium discoideum (Social amoeba), this protein is AP-3 complex subunit mu (apm3).